The sequence spans 144 residues: Large ribosomal subunit protein uL15 (144 aa).

The tract at residues 1–49 (MRLNTLSPAAGAKSAAKRVGRGIGSGLGKTAGRGHKGQKSRSGGGVRVG) is disordered. A compositionally biased stretch (gly residues) spans 21 to 31 (RGIGSGLGKTA).

The protein belongs to the universal ribosomal protein uL15 family. As to quaternary structure, part of the 50S ribosomal subunit.

In terms of biological role, binds to the 23S rRNA. This Shewanella piezotolerans (strain WP3 / JCM 13877) protein is Large ribosomal subunit protein uL15.